The chain runs to 41 residues: Histone H3.2 (41 aa).

A disordered region spans residues 1–41 (MARTKQTARKSTGAKAPRKQLASKAARKSAPATGGIKKPHR).

This sequence belongs to the histone H3 family. The nucleosome is a histone octamer containing two molecules each of H2A, H2B, H3 and H4 assembled in one H3-H4 heterotetramer and two H2A-H2B heterodimers. The octamer wraps approximately 147 bp of DNA.

Its subcellular location is the nucleus. The protein resides in the chromosome. Functionally, core component of nucleosome. Nucleosomes wrap and compact DNA into chromatin, limiting DNA accessibility to the cellular machineries which require DNA as a template. Histones thereby play a central role in transcription regulation, DNA repair, DNA replication and chromosomal stability. DNA accessibility is regulated via a complex set of post-translational modifications of histones, also called histone code, and nucleosome remodeling. The sequence is that of Histone H3.2 from Tetrahymena australis.